Here is a 234-residue protein sequence, read N- to C-terminus: Thiamine-phosphate synthase (234 aa).

4-amino-2-methyl-5-(diphosphooxymethyl)pyrimidine-binding positions include 52-56 (QYRSK) and Asn84. Mg(2+)-binding residues include Asp85 and Asp104. A 4-amino-2-methyl-5-(diphosphooxymethyl)pyrimidine-binding site is contributed by Ser123. 150 to 152 (SVT) serves as a coordination point for 2-[(2R,5Z)-2-carboxy-4-methylthiazol-5(2H)-ylidene]ethyl phosphate. Lys153 contacts 4-amino-2-methyl-5-(diphosphooxymethyl)pyrimidine. Gly180 contacts 2-[(2R,5Z)-2-carboxy-4-methylthiazol-5(2H)-ylidene]ethyl phosphate.

It belongs to the thiamine-phosphate synthase family. Mg(2+) serves as cofactor.

It carries out the reaction 2-[(2R,5Z)-2-carboxy-4-methylthiazol-5(2H)-ylidene]ethyl phosphate + 4-amino-2-methyl-5-(diphosphooxymethyl)pyrimidine + 2 H(+) = thiamine phosphate + CO2 + diphosphate. It catalyses the reaction 2-(2-carboxy-4-methylthiazol-5-yl)ethyl phosphate + 4-amino-2-methyl-5-(diphosphooxymethyl)pyrimidine + 2 H(+) = thiamine phosphate + CO2 + diphosphate. The catalysed reaction is 4-methyl-5-(2-phosphooxyethyl)-thiazole + 4-amino-2-methyl-5-(diphosphooxymethyl)pyrimidine + H(+) = thiamine phosphate + diphosphate. It participates in cofactor biosynthesis; thiamine diphosphate biosynthesis; thiamine phosphate from 4-amino-2-methyl-5-diphosphomethylpyrimidine and 4-methyl-5-(2-phosphoethyl)-thiazole: step 1/1. Its function is as follows. Condenses 4-methyl-5-(beta-hydroxyethyl)thiazole monophosphate (THZ-P) and 2-methyl-4-amino-5-hydroxymethyl pyrimidine pyrophosphate (HMP-PP) to form thiamine monophosphate (TMP). This Nitrosospira multiformis (strain ATCC 25196 / NCIMB 11849 / C 71) protein is Thiamine-phosphate synthase.